A 352-amino-acid chain; its full sequence is UDP-N-acetylglucosamine--N-acetylmuramyl-(pentapeptide) pyrophosphoryl-undecaprenol N-acetylglucosamine transferase 2 (352 aa).

UDP-N-acetyl-alpha-D-glucosamine-binding positions include 11-13 (SAG), arginine 164, serine 194, and glutamine 289.

Belongs to the glycosyltransferase 28 family. MurG subfamily.

It localises to the cell membrane. The catalysed reaction is di-trans,octa-cis-undecaprenyl diphospho-N-acetyl-alpha-D-muramoyl-L-alanyl-D-glutamyl-meso-2,6-diaminopimeloyl-D-alanyl-D-alanine + UDP-N-acetyl-alpha-D-glucosamine = di-trans,octa-cis-undecaprenyl diphospho-[N-acetyl-alpha-D-glucosaminyl-(1-&gt;4)]-N-acetyl-alpha-D-muramoyl-L-alanyl-D-glutamyl-meso-2,6-diaminopimeloyl-D-alanyl-D-alanine + UDP + H(+). The protein operates within cell wall biogenesis; peptidoglycan biosynthesis. Functionally, cell wall formation. Catalyzes the transfer of a GlcNAc subunit on undecaprenyl-pyrophosphoryl-MurNAc-pentapeptide (lipid intermediate I) to form undecaprenyl-pyrophosphoryl-MurNAc-(pentapeptide)GlcNAc (lipid intermediate II). This is UDP-N-acetylglucosamine--N-acetylmuramyl-(pentapeptide) pyrophosphoryl-undecaprenol N-acetylglucosamine transferase 2 from Bacillus anthracis.